The sequence spans 510 residues: Monocarboxylate transporter 14 (510 aa).

Residues 1–27 are Cytoplasmic-facing; that stretch reads MYTSHEDIGYDFEDGPKDKKTLKPHPN. 6 helical membrane-spanning segments follow: residues 28–48, 74–94, 103–123, 127–147, 159–179, and 191–209; these read IDGG…ILIM, WVSS…GLFI, AIIG…AANV, FITF…PAVV, LAQG…TVLL, and AMLI…GALM. The disordered stretch occupies residues 214-255; it reads PGKNPNDPGEKDVRGLPAHSTESVKSTGQQGRTEEKDGGLGN. Polar residues predominate over residues 233–244; sequence STESVKSTGQQG. Helical transmembrane passes span 315 to 335, 353 to 373, 379 to 399, 408 to 428, 443 to 463, and 474 to 494; these read MFVA…IPFI, FPLT…LGVI, ISVW…IFIL, LAVI…MPVV, GIII…AGWI, and FYIC…QPCI. Residues 495–510 lie on the Cytoplasmic side of the membrane; it reads RIIEQSRRKYMDGAHV.

This sequence belongs to the major facilitator superfamily. Monocarboxylate porter (TC 2.A.1.13) family.

The protein resides in the cell membrane. Its function is as follows. Proton-linked monocarboxylate transporter. May catalyze the transport of monocarboxylates across the plasma membrane. The chain is Monocarboxylate transporter 14 (SLC16A14) from Homo sapiens (Human).